Here is a 407-residue protein sequence, read N- to C-terminus: uncharacterized protein (407 aa).

Disordered regions lie at residues Met-1–Asp-64, Gly-110–Phe-276, and Gln-314–Pro-341. Over residues Lys-7–Phe-32 the composition is skewed to polar residues. The span at Thr-33–Lys-44 shows a compositional bias: basic and acidic residues. Positions Asp-122–Ser-137 are enriched in acidic residues. Polar residues-rich tracts occupy residues Asp-138–Ser-147 and Asn-184–Pro-201. Over residues Ser-209 to Ser-231 the composition is skewed to low complexity. Residues Lys-232–Asn-246 are compositionally biased toward basic residues. The segment covering Lys-247–Thr-258 has biased composition (basic and acidic residues). 2 stretches are compositionally biased toward basic residues: residues His-259 to Arg-270 and Arg-316 to Pro-341.

This is an uncharacterized protein from Acanthamoeba polyphaga mimivirus (APMV).